The chain runs to 341 residues: Methionine import ATP-binding protein MetN (341 aa).

The region spanning 2 to 241 (IELNQIVKRY…PQHDVTKRFV (240 aa)) is the ABC transporter domain. 38–45 (GFSGAGKS) contributes to the ATP binding site.

The protein belongs to the ABC transporter superfamily. Methionine importer (TC 3.A.1.24) family. In terms of assembly, the complex is composed of two ATP-binding proteins (MetN), two transmembrane proteins (MetI) and a solute-binding protein (MetQ).

The protein resides in the cell membrane. The enzyme catalyses L-methionine(out) + ATP + H2O = L-methionine(in) + ADP + phosphate + H(+). It catalyses the reaction D-methionine(out) + ATP + H2O = D-methionine(in) + ADP + phosphate + H(+). Its function is as follows. Part of the ABC transporter complex MetNIQ involved in methionine import. Responsible for energy coupling to the transport system. This chain is Methionine import ATP-binding protein MetN, found in Staphylococcus saprophyticus subsp. saprophyticus (strain ATCC 15305 / DSM 20229 / NCIMB 8711 / NCTC 7292 / S-41).